A 381-amino-acid chain; its full sequence is Cyclin-dependent kinase inhibitor CIP1 (381 aa).

The segment covering 1–11 (MLLERLHKRLH) has biased composition (basic residues). The interval 1–30 (MLLERLHKRLHAGSSRRSQENKDKNCKPED) is disordered. The span at 17–30 (RSQENKDKNCKPED) shows a compositional bias: basic and acidic residues. Residues T65, T69, and T73 each carry the phosphothreonine modification.

Interact with the CDC28/CLN2 complex. Post-translationally, phosphorylated during S phase in a CDC28-dependent manner. Phosphorylated at Thr-65 and Thr-73 by HOG1 under osmotic stress. The phosphorylations of Thr-65 and Thr-73 are necessary for CIP1-induced growth inhibition.

The protein resides in the cytoplasm. It localises to the nucleus. Its function is as follows. Acts as an inhibitor of the CDC28/CLN2 cyclin-dependent kinase complex. Stabilizes the CDC28 inhibitor SIC1. Negatively regulates the G1/S phase transition. Contributes to osmostress-induced transitory G1 delay. This is Cyclin-dependent kinase inhibitor CIP1 from Saccharomyces cerevisiae (strain ATCC 204508 / S288c) (Baker's yeast).